The primary structure comprises 200 residues: Signal peptidase complex catalytic subunit SEC11 (200 aa).

The Cytoplasmic portion of the chain corresponds to methionine 1–threonine 15. The chain crosses the membrane as a helical; Signal-anchor for type II membrane protein span at residues leucine 16–tryptophan 33. Over lysine 34–glutamate 200 the chain is Lumenal. N-linked (GlcNAc...) asparagine glycosylation is present at asparagine 41. Residues serine 53 and histidine 92 each act as charge relay system in the active site. Positions glycine 101–lysine 134 are disordered. Residues glycine 103–serine 119 are compositionally biased toward basic and acidic residues. Catalysis depends on aspartate 142, which acts as the Charge relay system. A C-terminal short (CTS) helix region spans residues valine 186–leucine 197.

The protein belongs to the peptidase S26B family. In terms of assembly, component of the signal peptidase complex (SPC) composed of a catalytic subunit SEC11 and three accessory subunits SPC1, SPC2 and SPC3. The complex induces a local thinning of the ER membrane which is used to measure the length of the signal peptide (SP) h-region of protein substrates. This ensures the selectivity of the complex towards h-regions shorter than 18-20 amino acids. SPC associates with the translocon complex.

The protein resides in the endoplasmic reticulum membrane. It catalyses the reaction Cleavage of hydrophobic, N-terminal signal or leader sequences from secreted and periplasmic proteins.. In terms of biological role, catalytic component of the signal peptidase complex (SPC) which catalyzes the cleavage of N-terminal signal sequences from nascent proteins as they are translocated into the lumen of the endoplasmic reticulum. Specifically cleaves N-terminal signal peptides that contain a hydrophobic alpha-helix (h-region) shorter than 18-20 amino acids. The protein is Signal peptidase complex catalytic subunit SEC11 (SEC11) of Arthroderma benhamiae (strain ATCC MYA-4681 / CBS 112371) (Trichophyton mentagrophytes).